We begin with the raw amino-acid sequence, 47 residues long: Large ribosomal subunit protein bL27c (47 aa).

The interval 1 to 21 (STKNGRDSNAQRLGVKKYGGE) is disordered.

The protein belongs to the bacterial ribosomal protein bL27 family.

The protein localises to the plastid. The protein resides in the chloroplast. This chain is Large ribosomal subunit protein bL27c (rpl27), found in Porphyridium purpureum (Red alga).